We begin with the raw amino-acid sequence, 632 residues long: MHFHERFDVIVIGGGHAGTEAALAAARMGSKTLLLTHNIDTLGQMSCNPAIGGIGKGHLVKEIDALGGAMAIATDYAGIQFRTLNSSKGPAVRATRAQADRALYRAKIQEILQNQPNLRLFQQAVDDLIVENGKVTGVVTQMGLAFEAPAVVLTAGTFLSGKIHIGMQNYSGGRAGDPPSIALADRLRELPIRIGRLKTGTPPRIDANTINFDLMTEQKGDTPLPVMSFIGDVSHHPRQVSCFVTHTNERTHDIIRGGLDRSPMYSGIIEGVGPRYCPSIEDKINRFADKSSHQIFIEPEGLNTNEIYPNGISTSLPFDVQLNLVRSIKGMENAEIIRPGYAIEYDYFDPRDLKNSLETKSIQGLFFAGQINGTTGYEEAGAQGLLAGMNASLQVQGKESWCPRRDEAYLGVLVDDLSTLGTKEPYRMFTSRAEYRLLLREDNADLRLTEKGHQIGLVDEDRWAKFNKKRESIELELQRLRSQWVHPNSPLLEVLNPELNTPISREASFEDLLRRPEMDYPKLMSLEGFGPALEDQRAAEQVQIQVKYSGYIQRQQDEIDKAIKHETTGLPLELDYQEVPGLSNEVIAKLNDHKPETIGQASRISGMTPAAISILLVHLKRRGLLRKNPSKS.

FAD is bound by residues 13-18 (GGGHAG), V125, and S180. 273–287 (GPRYCPSIEDKINRF) contacts NAD(+). Q370 contributes to the FAD binding site.

Belongs to the MnmG family. As to quaternary structure, homodimer. Heterotetramer of two MnmE and two MnmG subunits. It depends on FAD as a cofactor.

It localises to the cytoplasm. Functionally, NAD-binding protein involved in the addition of a carboxymethylaminomethyl (cmnm) group at the wobble position (U34) of certain tRNAs, forming tRNA-cmnm(5)s(2)U34. This is tRNA uridine 5-carboxymethylaminomethyl modification enzyme MnmG from Shewanella sediminis (strain HAW-EB3).